A 257-amino-acid polypeptide reads, in one-letter code: Probable amino-acid ABC transporter-binding protein HI_1080 (257 aa).

A signal peptide spans 1 to 23; the sequence is MKKLLFTTALLTGAIAFSTFSHA.

The protein belongs to the bacterial solute-binding protein 3 family.

The protein localises to the periplasm. Functionally, probably part of a binding-protein-dependent transport system for an amino acid. The polypeptide is Probable amino-acid ABC transporter-binding protein HI_1080 (Haemophilus influenzae (strain ATCC 51907 / DSM 11121 / KW20 / Rd)).